The primary structure comprises 125 residues: Small ribosomal subunit protein uS12 (125 aa).

Asp-89 carries the 3-methylthioaspartic acid modification. Residues 105-125 (AGVKDRKQARSKYGAKRPKAA) are disordered. The span at 113 to 125 (ARSKYGAKRPKAA) shows a compositional bias: basic residues.

It belongs to the universal ribosomal protein uS12 family. In terms of assembly, part of the 30S ribosomal subunit. Contacts proteins S8 and S17. May interact with IF1 in the 30S initiation complex.

With S4 and S5 plays an important role in translational accuracy. In terms of biological role, interacts with and stabilizes bases of the 16S rRNA that are involved in tRNA selection in the A site and with the mRNA backbone. Located at the interface of the 30S and 50S subunits, it traverses the body of the 30S subunit contacting proteins on the other side and probably holding the rRNA structure together. The combined cluster of proteins S8, S12 and S17 appears to hold together the shoulder and platform of the 30S subunit. This is Small ribosomal subunit protein uS12 from Methylobacillus flagellatus (strain ATCC 51484 / DSM 6875 / VKM B-1610 / KT).